A 1620-amino-acid polypeptide reads, in one-letter code: MIKREISVRQQTCALLQKNLLKKWRLKRESLMEWVSSLLLLLFLYWYPHGHGATDLSSVPTKDLGRVDSFRQSGFMIGYTPVTSMTQQIMEKVAATPFMADKKVLGLLDEENIKELTESHAEIIRVIFSDTFSYHLKFQFDQRIPTSRELRDHNAHCDGLYEDVNCLIAIFWKEGFVALQAAINAAIIETTTNHSVMEELLSVSGKFMKIHPFVRQEGILTDFFIFTCIISFSPITYYVSINVARERKRMKGLMMMMGLRDPAFWLSWGLLYAGFVFIMALSLALVIKSVQFFILTSFMVVFSLFLLYGLSMITLAFLMSALVRKSVLTGLSVFLLTIFWGSLGFTSLYRYLPAPVEWTLSLFSPFAFTLGMAQLLRVDYDLNSNAPPDPASGSNLIIATNFMLVFDAFLYLALMMYFEKVLPNEYGHQHSPLFFLKSSFWLQTRKPAHVILEDGIDPVPSSGDSFEPVSPEFHGKESIRIRNISKEYKGKPNKIEALKDLTLDIYEGQITAVLGHSGAGKSTLLNILSGLSVPTKGSVTIYNNNLSEMADLENILRIAGVCPQANVQFDFLTVRENLRLFAKIRGIPPQDVEKEVQRVLLELEMKNIQNILAQNLSGGQKRKLTFGIAILGDSQIFLLDEPTAGLDPFSRHRVWNLLKERRADRVVLFSTQFMDEADILADRKVFISNGRLKCAGSSLFLKKKWGVGYHLSLQLKEVCVPENITSLVKQHIPAAKLSAEGEGKLLYTLPLETTYRFPELCQSLDSCPGLGIENYGVSMTTLNEVFLKLEGKASIDEPEVDIVGEGQTERSGDTERLMEMEQTLSSLRETEKTDGMALWRQQTCAIAKVRLLKLKHERKTLLSVLLILVVGICPFLFENISTKIRQSSYTWELSPHDYFLAPGQQPQGMLTQLLIINKTEASIDDFIHSVERQNIALEVDASGTRDGTDDPSYNGALIVSGNEKNHSFSFACNTKRLNCFPVLMDILSNGLLGMVKPSARIQTDRSTYLMDETIHPLEDLWKTAFWLILTSACPPYIAMSSVTDYKNRAWFQLRVSGLFPSAYWVGQAMVDIPLYCFVFLFMSLMDYLFRFPDTMFSIISHVIQIPCSVGYAISLIFLTYVISFISRKGKKNSGIWSLSFYIITVFSVAVILLAFDVDGTQYYIIFLIPPSTLVGCLILSLHLFIGQIFEEGQVIEPFLVFLIPFLHVFIFIFTLRCLEWKFGKKTMRKDPIFRISPRNNDVYQNPEEPEDEDEDVQMERMRTANALVSTSFDEKPVIIASCLRKEYAGKQKHCLSKKKAKIATRNVSFCVRKGEILGLLGHNGAGKSTSLKMISGDTKVTAGQVLLKGSREGDTPGFLGYCPQENALWPNLTVKEHLEIFAAVRGLRKSHAAVAITRLADALKLQDQLKSPVKTLSEGVKRKLCFVLSILGNPSILLLDEPSTGLDPEGQQQIWQAIRAIIKNTDRGALLTTHYMAEAEALCDRVAILVSGRLRCIGSIQHLKSKFGKDYLLEMKVKTLEQVEPLNTEILRLFPQASRQERYSSLMAYKLPVEAVQPLSQAFFKLEKVKQTFDLEEYSLSQSTLEQVFLELSKEQELDGLELEELDSSIKWKLLPQEEA.

Transmembrane regions (helical) follow at residues 30 to 50 (SLME…YPHG), 223 to 243 (FFIF…SINV), 267 to 287 (SWGL…ALVI), 298 to 318 (FMVV…LAFL), 326 to 346 (SVLT…LGFT), 352 to 372 (LPAP…TLGM), and 396 to 416 (LIIA…ALMM). In terms of domain architecture, ABC transporter 1 spans 479–714 (IRIRNISKEY…WGVGYHLSLQ (236 aa)). Residue 515 to 522 (GHSGAGKS) participates in ATP binding. N-linked (GlcNAc...) asparagine glycosylation is present at asparagine 723. A run of 8 helical transmembrane segments spans residues 860–880 (TLLS…FENI), 979–999 (CFPV…KPSA), 1023–1043 (TAFW…SSVT), 1069–1089 (MVDI…DYLF), 1105–1125 (IPCS…ISFI), 1135–1155 (IWSL…LLAF), 1164–1184 (IIFL…LHLF), and 1194–1214 (VIEP…FIFT). The ABC transporter 2 domain maps to 1283–1516 (LRKEYAGKQK…FGKDYLLEMK (234 aa)). Residue 1321–1328 (GHNGAGKS) coordinates ATP.

Belongs to the ABC transporter superfamily. ABCA family. In terms of tissue distribution, expressed in heart, brain, lung, liver and skeletal muscle. Highly expressed in the liver, and is also abundant in heart and skeletal muscle. Highly expressed in liver.

It localises to the cell membrane. It is found in the basolateral cell membrane. The catalysed reaction is taurocholate(in) + ATP + H2O = taurocholate(out) + ADP + phosphate + H(+). It carries out the reaction cholesterol(in) + ATP + H2O = cholesterol(out) + ADP + phosphate + H(+). Its activity is regulated as follows. Cholesterol efflux is increased by extracellularly applied taurocholate. In terms of biological role, mediates cholesterol and taurocholate efflux. Through the interaction with ABCA1 potentiates the cholesterol efflux to lipid-free APOA1, in turn regulates high-density lipoprotein cholesterol levels. This Mus musculus (Mouse) protein is ABC-type organic anion transporter ABCA8B.